The chain runs to 177 residues: Non-specific lipid transfer protein GPI-anchored 22 (177 aa).

An N-terminal signal peptide occupies residues 1 to 29; it reads MARFMAYNQNPQMLALCITVAVMFLGVRS. Intrachain disulfides connect C38-C81, C48-C63, C64-C108, and C79-C117. N113 carries an N-linked (GlcNAc...) asparagine glycan. Residue S152 is the site of GPI-anchor amidated serine attachment. Residues 153–177 constitute a propeptide, removed in mature form; sequence SSIKGRDNKQFGLMMAGALSIWYIM.

This sequence belongs to the plant LTP family. In terms of tissue distribution, expressed in seedlings, preferentially in hypocotyls and roots. Also observed in siliques.

The protein localises to the cell membrane. In terms of biological role, probable lipid transfer protein. The chain is Non-specific lipid transfer protein GPI-anchored 22 from Arabidopsis thaliana (Mouse-ear cress).